Here is a 257-residue protein sequence, read N- to C-terminus: Folate receptor alpha (257 aa).

The N-terminal stretch at 1–24 (MAQRMTTQLLLLLVWVAVVGEAQT) is a signal peptide. Cystine bridges form between Cys37/Cys65, Cys57/Cys105, Cys66/Cys109, Cys89/Cys175, Cys96/Cys146, Cys135/Cys209, Cys139/Cys189, and Cys152/Cys169. An N-linked (GlcNAc...) asparagine glycan is attached at Asn69. Folate contacts are provided by residues Asp103, Tyr107, 124–128 (WRKER), 157–162 (HKGWNW), and Ser196. N-linked (GlcNAc...) asparagine glycosylation occurs at Asn161. Residue Asn201 is glycosylated (N-linked (GlcNAc...) asparagine). The GPI-anchor amidated serine moiety is linked to residue Ser234. The propeptide at 235–257 (GAGPWAAWPFLLSLALMLLWLLS) is removed in mature form.

Belongs to the folate receptor family. In terms of processing, the secreted form is derived from the membrane-bound form either by cleavage of the GPI anchor, or/and by proteolysis catalyzed by a metalloprotease. In terms of tissue distribution, primarily expressed in tissues of epithelial origin. Expression is increased in malignant tissues. Expressed in kidney, lung and cerebellum. Detected in placenta and thymus epithelium.

It localises to the cell membrane. Its subcellular location is the apical cell membrane. It is found in the basolateral cell membrane. The protein localises to the secreted. The protein resides in the cytoplasmic vesicle. It localises to the clathrin-coated vesicle. Its subcellular location is the endosome. Binds to folate and reduced folic acid derivatives and mediates delivery of 5-methyltetrahydrofolate and folate analogs into the interior of cells. Has high affinity for folate and folic acid analogs at neutral pH. Exposure to slightly acidic pH after receptor endocytosis triggers a conformation change that strongly reduces its affinity for folates and mediates their release. Required for normal embryonic development and normal cell proliferation. This chain is Folate receptor alpha (FOLR1), found in Homo sapiens (Human).